A 276-amino-acid polypeptide reads, in one-letter code: Undecaprenyl-diphosphatase 1 (276 aa).

5 helical membrane passes run 83-103 (FTLN…LFEK), 108-128 (VLFS…IILW), 187-207 (VATE…TLYE), 217-237 (VDSL…AFVC), and 252-272 (VFAW…YSGW).

Belongs to the UppP family.

The protein resides in the cell inner membrane. It catalyses the reaction di-trans,octa-cis-undecaprenyl diphosphate + H2O = di-trans,octa-cis-undecaprenyl phosphate + phosphate + H(+). Catalyzes the dephosphorylation of undecaprenyl diphosphate (UPP). Confers resistance to bacitracin. The protein is Undecaprenyl-diphosphatase 1 of Burkholderia cenocepacia (strain HI2424).